The chain runs to 497 residues: Cytochrome P450 71A18 (497 aa).

Residues 4–24 (TLMVSLCLTTLLTLLLLKKFL) form a helical membrane-spanning segment. Cysteine 439 is a binding site for heme.

This sequence belongs to the cytochrome P450 family. Heme serves as cofactor.

It localises to the membrane. In Arabidopsis thaliana (Mouse-ear cress), this protein is Cytochrome P450 71A18 (CYP71A18).